Consider the following 294-residue polypeptide: NAD kinase (294 aa).

The Proton acceptor role is filled by aspartate 73. Residues 73–74 (DG), 147–148 (NE), histidine 158, arginine 175, aspartate 177, 188–193 (TAYSLS), and glutamine 249 contribute to the NAD(+) site.

It belongs to the NAD kinase family. The cofactor is a divalent metal cation.

The protein localises to the cytoplasm. It carries out the reaction NAD(+) + ATP = ADP + NADP(+) + H(+). Its function is as follows. Involved in the regulation of the intracellular balance of NAD and NADP, and is a key enzyme in the biosynthesis of NADP. Catalyzes specifically the phosphorylation on 2'-hydroxyl of the adenosine moiety of NAD to yield NADP. The protein is NAD kinase of Aeromonas salmonicida (strain A449).